The chain runs to 344 residues: N-acetyl-gamma-glutamyl-phosphate reductase (344 aa).

C150 is a catalytic residue.

The protein belongs to the NAGSA dehydrogenase family. Type 1 subfamily.

It localises to the cytoplasm. It catalyses the reaction N-acetyl-L-glutamate 5-semialdehyde + phosphate + NADP(+) = N-acetyl-L-glutamyl 5-phosphate + NADPH + H(+). Its pathway is amino-acid biosynthesis; L-arginine biosynthesis; N(2)-acetyl-L-ornithine from L-glutamate: step 3/4. Catalyzes the NADPH-dependent reduction of N-acetyl-5-glutamyl phosphate to yield N-acetyl-L-glutamate 5-semialdehyde. The protein is N-acetyl-gamma-glutamyl-phosphate reductase of Pseudomonas putida (strain W619).